The sequence spans 271 residues: 4-diphosphocytidyl-2-C-methyl-D-erythritol kinase (271 aa).

Residue Lys17 is part of the active site. Residue Pro97–Ser107 coordinates ATP. Residue Asp137 is part of the active site.

This sequence belongs to the GHMP kinase family. IspE subfamily.

It catalyses the reaction 4-CDP-2-C-methyl-D-erythritol + ATP = 4-CDP-2-C-methyl-D-erythritol 2-phosphate + ADP + H(+). It functions in the pathway isoprenoid biosynthesis; isopentenyl diphosphate biosynthesis via DXP pathway; isopentenyl diphosphate from 1-deoxy-D-xylulose 5-phosphate: step 3/6. Its function is as follows. Catalyzes the phosphorylation of the position 2 hydroxy group of 4-diphosphocytidyl-2C-methyl-D-erythritol. The polypeptide is 4-diphosphocytidyl-2-C-methyl-D-erythritol kinase (Thermotoga maritima (strain ATCC 43589 / DSM 3109 / JCM 10099 / NBRC 100826 / MSB8)).